Consider the following 381-residue polypeptide: UDP-4-amino-4-deoxy-L-arabinose--oxoglutarate aminotransferase (381 aa).

Lys-182 is subject to N6-(pyridoxal phosphate)lysine.

Belongs to the DegT/DnrJ/EryC1 family. ArnB subfamily. In terms of assembly, homodimer. Pyridoxal 5'-phosphate serves as cofactor.

It catalyses the reaction UDP-4-amino-4-deoxy-beta-L-arabinose + 2-oxoglutarate = UDP-beta-L-threo-pentopyranos-4-ulose + L-glutamate. The protein operates within nucleotide-sugar biosynthesis; UDP-4-deoxy-4-formamido-beta-L-arabinose biosynthesis; UDP-4-deoxy-4-formamido-beta-L-arabinose from UDP-alpha-D-glucuronate: step 2/3. Its pathway is bacterial outer membrane biogenesis; lipopolysaccharide biosynthesis. Its function is as follows. Catalyzes the conversion of UDP-4-keto-arabinose (UDP-Ara4O) to UDP-4-amino-4-deoxy-L-arabinose (UDP-L-Ara4N). The modified arabinose is attached to lipid A and is required for resistance to polymyxin and cationic antimicrobial peptides. In Proteus mirabilis (strain HI4320), this protein is UDP-4-amino-4-deoxy-L-arabinose--oxoglutarate aminotransferase.